Here is a 396-residue protein sequence, read N- to C-terminus: Flap endonuclease 1 (396 aa).

Residues 1–105 are N-domain; it reads MGIHGLTKLL…DQLAQRTERR (105 aa). Mg(2+) is bound at residue Asp-34. Arg-71 contributes to the DNA binding site. 5 residues coordinate Mg(2+): Asp-87, Glu-159, Glu-161, Asp-180, and Asp-182. Residues 123–254 form an I-domain region; it reads AIEKYSKRSV…VRALQMIKKH (132 aa). Glu-159 is a binding site for DNA. DNA-binding residues include Gly-232 and Asp-234. Asp-234 serves as a coordination point for Mg(2+). Positions 338–346 are interaction with PCNA; the sequence is NQGRLESFF. Positions 341–396 are disordered; it reads RLESFFTSLPKPATADKAKPKEDDKKRKAGAAAGGKDAKGGAAAKKGKFGVGGGKK. Residues 354–366 are compositionally biased toward basic and acidic residues; the sequence is TADKAKPKEDDKK. Positions 370–384 are enriched in low complexity; sequence GAAAGGKDAKGGAAA.

The protein belongs to the XPG/RAD2 endonuclease family. FEN1 subfamily. In terms of assembly, interacts with PCNA. Three molecules of FEN1 bind to one PCNA trimer with each molecule binding to one PCNA monomer. PCNA stimulates the nuclease activity without altering cleavage specificity. The cofactor is Mg(2+). In terms of processing, phosphorylated. Phosphorylation upon DNA damage induces relocalization to the nuclear plasma.

The protein resides in the nucleus. It is found in the nucleolus. The protein localises to the nucleoplasm. It localises to the mitochondrion. Its function is as follows. Structure-specific nuclease with 5'-flap endonuclease and 5'-3' exonuclease activities involved in DNA replication and repair. During DNA replication, cleaves the 5'-overhanging flap structure that is generated by displacement synthesis when DNA polymerase encounters the 5'-end of a downstream Okazaki fragment. It enters the flap from the 5'-end and then tracks to cleave the flap base, leaving a nick for ligation. Also involved in the long patch base excision repair (LP-BER) pathway, by cleaving within the apurinic/apyrimidinic (AP) site-terminated flap. Acts as a genome stabilization factor that prevents flaps from equilibrating into structures that lead to duplications and deletions. Also possesses 5'-3' exonuclease activity on nicked or gapped double-stranded DNA, and exhibits RNase H activity. Also involved in replication and repair of rDNA and in repairing mitochondrial DNA. This chain is Flap endonuclease 1, found in Chlamydomonas reinhardtii (Chlamydomonas smithii).